A 412-amino-acid chain; its full sequence is MGFITKAIPIVLAALSTVNGAKILEAGPHAETIPNKYIVVMKREVSDEAFSAHTTWLSQNLNRRVMRRSGSSKAMAGMQDKYSLGGIFRAYSGEFDDAMIKDISSHDDVDYIEPDFVVRTSTNGTNLTRQDNVPSWGLARVSSKKAGGTTYYYDSSAGKGVTAYVIDTGIDINHEDFRGRAKWGKNFVDDMDEDCNGHGTHVAGTVGGTKYGLAKGVSLVAVKVLDCEGSGSNSGVIKGMEWAMREASGGGNGTAKAAGKAVMNMSLGGTRSQASNQAAKAISDAGIFMAVAAGNENMDAQHSSPASEPSVCTVAASTEDDGKADFSNYGQLVDVYAPGKDITSLKPGGSTDTLSGTSMASPHVCGLGAYLIGLGKQGGPGLCDTIKEMAHDAIQRPGEGTTSKLIYNGSGK.

The N-terminal stretch at 1–20 (MGFITKAIPIVLAALSTVNG) is a signal peptide. Positions 21-127 (AKILEAGPHA…VRTSTNGTNL (107 aa)) are excised as a propeptide. The 85-residue stretch at 36-120 (KYIVVMKREV…YIEPDFVVRT (85 aa)) folds into the Inhibitor I9 domain. Residues Asn-123 and Asn-126 are each glycosylated (N-linked (GlcNAc...) asparagine). The 278-residue stretch at 135-412 (SWGLARVSSK…SKLIYNGSGK (278 aa)) folds into the Peptidase S8 domain. Residues Asp-167 and His-198 each act as charge relay system in the active site. 2 N-linked (GlcNAc...) asparagine glycosylation sites follow: Asn-252 and Asn-264. Ser-358 acts as the Charge relay system in catalysis. N-linked (GlcNAc...) asparagine glycosylation is present at Asn-408.

Belongs to the peptidase S8 family.

The protein resides in the secreted. Its function is as follows. Secreted subtilisin-like serine protease with keratinolytic activity that contributes to pathogenicity. This is Subtilisin-like protease 6 (SUB6) from Trichophyton tonsurans (Scalp ringworm fungus).